The chain runs to 212 residues: Ubiquitin-like protein MDY2 (212 aa).

The 79-residue stretch at valine 74–proline 152 folds into the Ubiquitin-like domain. Positions proline 150–valine 177 are disordered.

Interacts with GET4.

The protein localises to the cytoplasm. It localises to the cytosol. The protein resides in the nucleus. In terms of biological role, required for efficient mating. Involved in the production of alpha-factor, the KAR9 and TUB1 location to the shmoo tip and nuclear migration into pheromone-induced shmoos. The chain is Ubiquitin-like protein MDY2 (MDY2) from Saccharomyces cerevisiae (strain ATCC 204508 / S288c) (Baker's yeast).